The chain runs to 360 residues: Phenylalanine--tRNA ligase alpha subunit (360 aa).

E260 contributes to the Mg(2+) binding site.

It belongs to the class-II aminoacyl-tRNA synthetase family. Phe-tRNA synthetase alpha subunit type 1 subfamily. In terms of assembly, tetramer of two alpha and two beta subunits. It depends on Mg(2+) as a cofactor.

It localises to the cytoplasm. It carries out the reaction tRNA(Phe) + L-phenylalanine + ATP = L-phenylalanyl-tRNA(Phe) + AMP + diphosphate + H(+). The chain is Phenylalanine--tRNA ligase alpha subunit from Cereibacter sphaeroides (strain ATCC 17029 / ATH 2.4.9) (Rhodobacter sphaeroides).